The primary structure comprises 233 residues: MTKNPRNNKPKKILDSSYKSKTIWQNYIDALFETFPQLEISEVWAKWDGGNVTKDGGDAKLTANIRTGEHFLKAREAHIVDPNSDIYNTILYPKTGADLPCFGMDLMKFSDKKVIIVFDFQHPREKYLFSVDGLPEDDGKYRFFEMGNHFSKNIFVRYCKPDEVDQYLDTFKLYLTKYKEMIDNNKPVGEDTTVYSDFDTYMTELDPVRGYMKNKFGEGRSEAFVNDFLFSYK.

The protein belongs to the HY2 family.

The enzyme catalyses (3Z)-phycoerythrobilin + 2 oxidized 2[4Fe-4S]-[ferredoxin] = biliverdin IXalpha + 2 reduced 2[4Fe-4S]-[ferredoxin] + 4 H(+). Plays a role in phycoerythrobilin biosynthesis, the red pigment chromophore photosynthetically active biliproteins of the host cyanobacteria. Uses a four-electron reduction to carry out the reactions catalyzed by two enzymes (EC 1.3.7.2 and EC 1.3.7.3) in host. This chain is Phycoerythrobilin synthase (pebS), found in Prochlorococcus.